The primary structure comprises 219 residues: uncharacterized protein (219 aa).

An HD domain is found at 57 to 158; it reads QLEHMTRAAM…LSEASRQTLL (102 aa).

This is an uncharacterized protein from Acanthamoeba polyphaga mimivirus (APMV).